The sequence spans 517 residues: MGDPSKQDILTIFKRLRSVPTNKVCFDCGAKNPSWASITYGVFLCIDCSGSHRSLGVHLSFIRSTELDSNWSWFQLRCMQVGGNANASSFFHQHGCDTNDTNAKYNSRAAQLYRERIKALASQATRKHGTDLWLDSCVVPPSSPPPKEEDFFASHASPEVSSTGWASAQPEPSLTPRNVDAPAASSEGVPEQGPSVEGLNVPTKAAVGEVSSIIKKKPNQAKRGLGAKKGSLGAQKLSNTCFNEIEKQAQAVDKMNAQEDLLSRAAPKEESIVSSLRLAYKDLEIQMKKDEKMNMSGKKKAESERLGMGFGNSRSGISHSVTSDMQTIEQETPITAKPRKKYGDDSDDSYFTSSSRFFDEPMELRSSSFSSWDDSSDSYWKKETIKDTDPIPKNTGYTDRPTTRRKPDSEPAENTDEAQKKFGNVKAISSDMYFGRQAKADYEARARLERLSASSSISSADLFDEQRKQTAGSYNLTSVLPTAPDMAQFKQGVRSVAGKLSVFANGVMTSIQDRYGS.

In terms of domain architecture, Arf-GAP spans 10 to 126 (LTIFKRLRSV…IKALASQATR (117 aa)). The segment at 25–48 (CFDCGAKNPSWASITYGVFLCIDC) adopts a C4-type zinc-finger fold. Positions 139–200 (VPPSSPPPKE…EQGPSVEGLN (62 aa)) are disordered. The segment covering 159 to 176 (EVSSTGWASAQPEPSLTP) has biased composition (polar residues). Serine 231 is subject to Phosphoserine. Residues 243–263 (NEIEKQAQAVDKMNAQEDLLS) adopt a coiled-coil conformation. Residues serine 271 and serine 275 each carry the phosphoserine modification. Residues 291–305 (EKMNMSGKKKAESER) show a composition bias toward basic and acidic residues. 2 disordered regions span residues 291-349 (EKMN…SDDS) and 362-422 (MELR…QKKF). The segment covering 312 to 333 (NSRSGISHSVTSDMQTIEQETP) has biased composition (polar residues). Serine 371 carries the post-translational modification Phosphoserine. Residues 379-390 (YWKKETIKDTDP) show a composition bias toward basic and acidic residues. Phosphoserine occurs at positions 429, 452, 454, 456, 458, and 459.

The protein resides in the cytoplasm. Its subcellular location is the golgi apparatus membrane. GAP activity stimulated by phosphatidylinositol 4,5-bisphosphate (PIP2). In terms of biological role, GTPase-activating protein (GAP) for ADP ribosylation factor 1 (ARF1). Hydrolysis of ARF1-bound GTP may lead to dissociation of coatomer from Golgi-derived membranes to allow fusion with target membranes. The polypeptide is ADP-ribosylation factor GTPase-activating protein 3 (Bos taurus (Bovine)).